The chain runs to 274 residues: MAIKSYKPTSAGRRHQTCSTFEEITSTTPEKSLLVKIKKTGGRNHFGRVTARHQGGGHKQKYRMIDFRRDKRGIPAKVATIEYDPNRSARIALLHYTDGEKRYILAPLDLKVGDTVLSGPEADIKPGNSLPLRSIPLGTIIHNIELKIGKGAQLARSAGTFAQLMSKEGKYSQVKLPSGEVRLVLQDCYATIGQVGNIDHENVCLGKAGRSRWLGKRPKVRGVAMNPVDHPHGGGEGRTSGGRHPVTPWGIPTKGYKTRTNKTSDRFIVKKRTK.

Positions 223–256 are disordered; that stretch reads VAMNPVDHPHGGGEGRTSGGRHPVTPWGIPTKGY.

The protein belongs to the universal ribosomal protein uL2 family. Part of the 50S ribosomal subunit. Forms a bridge to the 30S subunit in the 70S ribosome.

Functionally, one of the primary rRNA binding proteins. Required for association of the 30S and 50S subunits to form the 70S ribosome, for tRNA binding and peptide bond formation. It has been suggested to have peptidyltransferase activity; this is somewhat controversial. Makes several contacts with the 16S rRNA in the 70S ribosome. This is Large ribosomal subunit protein uL2 from Trichlorobacter lovleyi (strain ATCC BAA-1151 / DSM 17278 / SZ) (Geobacter lovleyi).